The primary structure comprises 77 residues: Small ribosomal subunit protein bS21 (77 aa).

It belongs to the bacterial ribosomal protein bS21 family.

The protein is Small ribosomal subunit protein bS21 of Methylococcus capsulatus (strain ATCC 33009 / NCIMB 11132 / Bath).